Reading from the N-terminus, the 417-residue chain is Snake venom metalloproteinase kistomin (417 aa).

The N-terminal stretch at 1 to 20 is a signal peptide; that stretch reads MIEVLLVTICLAAFPYQGSS. Positions 21–189 are excised as a propeptide; it reads IILESGNVND…KKPFRLNLTP (169 aa). Residues 197-391 form the Peptidase M12B domain; it reads AKVYLVIVAD…RKPECLFKKP (195 aa). Cystine bridges form between Cys-308–Cys-386, Cys-348–Cys-370, and Cys-350–Cys-353. His-333 is a binding site for Zn(2+). Glu-334 is an active-site residue. Residues His-337 and His-343 each coordinate Zn(2+). The propeptide occupies 392-417; sequence LRTDTVSTPVSGNEPLEVITMDDFYA.

Belongs to the venom metalloproteinase (M12B) family. P-I subfamily. Monomer. Zn(2+) serves as cofactor. In terms of tissue distribution, expressed by the venom gland.

It localises to the secreted. With respect to regulation, inhibited by EDTA, and O-phenanthrolene. Its function is as follows. Snake venom zinc metalloprotease that inhibits platelet aggregation by binding specifically to platelet glycoprotein VI (GP6) and platelet glycoprotein Ib alpha (GP1BA). It inhibits the interaction between collagen and platelet GP6 by cleaving GP6 (at '225-Glu-|-Ala-226' and '238-Val-|-Phe-239' bonds), and inhibits vWF-induced platelet aggregation by cleaving GP1BA and vWF. Cleavage of GP1BA occurs at two distinct sites to generate two soluble fragments. It also cleaves alpha- (FGA) and subsequently the gamma-chain (FGG) of fibrinogen, leaving the beta-chain unaffected. It also inhibits collagen-, convulxin- and ristocetin-induced platelet aggregation. It blocks the adhesion of platelet to immobilized collagen, but only exerts a slight inhibition to fibrinogen. In vivo, it exerts potent antithrombotic effect. This Calloselasma rhodostoma (Malayan pit viper) protein is Snake venom metalloproteinase kistomin.